The following is a 279-amino-acid chain: Replication protein A 32 kDa subunit A (279 aa).

Residues 1–39 (MMSFSQPDAFSPSQFTSSQNAAADSTTPSKSRGASSTMP) are disordered. The segment at residues 71–145 (VRLVGLVSGK…RATAFAIRPV (75 aa)) is a DNA-binding region (OB). The tract at residues 181–210 (GSSSSNGFSEMTTPTSVKSNPAPVLSVTNG) is disordered. A compositionally biased stretch (polar residues) spans 190–199 (EMTTPTSVKS).

This sequence belongs to the replication factor A protein 2 family. In terms of assembly, heterotrimer of RPA1, RPA2 and RPA3 (canonical replication protein A complex). Interacts with RPA1A, RPA1B and RPA3. In terms of processing, phosphorylated in a cell-cycle-dependent manner (from the S phase until mitosis). In response to DNA damage, recruited to DNA-repair nuclear foci, as a hypophosphorylated form. Expressed in root tips, roots, shoot apical meristem (SAM), young leaves, flag leaves and ears, and at lower levels in mature leaves.

The protein resides in the nucleus. Functionally, component of the replication protein A complex (RPA) required for DNA recombination, repair and replication. The activity of RPA is mediated by single-stranded DNA binding and protein interactions. This is Replication protein A 32 kDa subunit A (RPA2A) from Oryza sativa subsp. japonica (Rice).